Consider the following 166-residue polypeptide: Protein-export protein SecB (166 aa).

Belongs to the SecB family. Homotetramer, a dimer of dimers. One homotetramer interacts with 1 SecA dimer.

It is found in the cytoplasm. Functionally, one of the proteins required for the normal export of preproteins out of the cell cytoplasm. It is a molecular chaperone that binds to a subset of precursor proteins, maintaining them in a translocation-competent state. It also specifically binds to its receptor SecA. This is Protein-export protein SecB from Roseobacter denitrificans (strain ATCC 33942 / OCh 114) (Erythrobacter sp. (strain OCh 114)).